We begin with the raw amino-acid sequence, 314 residues long: 3'-5' exoribonuclease YhaM (314 aa).

One can recognise an HD domain in the interval 163–279; it reads HVVSMLDLAK…LHYIDNLDAK (117 aa).

The protein belongs to the YhaM family.

Functionally, shows a 3'-5' exoribonuclease activity. This is 3'-5' exoribonuclease YhaM from Bacillus mycoides (strain KBAB4) (Bacillus weihenstephanensis).